The sequence spans 224 residues: Transposase for insertion sequence element IS257 in transposon Tn4003 (224 aa).

A DNA-binding region (H-T-H motif) is located at residues 33-52 (EILRGRGVNVHHSTVYRWVQ). Residues 73–222 (WRIDETYIKI…SPCHEISIML (150 aa)) enclose the Integrase catalytic domain.

In terms of biological role, involved in the transposition of the insertion sequence. In Staphylococcus aureus, this protein is Transposase for insertion sequence element IS257 in transposon Tn4003.